Here is a 171-residue protein sequence, read N- to C-terminus: uncharacterized protein (171 aa).

The chain crosses the membrane as a helical span at residues 5–25 (FLLTIFALWVGGFGYYLYLIN).

It localises to the membrane. This is an uncharacterized protein from Rickettsia conorii (strain ATCC VR-613 / Malish 7).